A 302-amino-acid polypeptide reads, in one-letter code: Urease accessory protein UreD 2 (302 aa).

This sequence belongs to the UreD family. In terms of assembly, ureD, UreF and UreG form a complex that acts as a GTP-hydrolysis-dependent molecular chaperone, activating the urease apoprotein by helping to assemble the nickel containing metallocenter of UreC. The UreE protein probably delivers the nickel.

Its subcellular location is the cytoplasm. Functionally, required for maturation of urease via the functional incorporation of the urease nickel metallocenter. The protein is Urease accessory protein UreD 2 of Brucella melitensis biotype 1 (strain ATCC 23456 / CCUG 17765 / NCTC 10094 / 16M).